The following is a 335-amino-acid chain: Anthranilate phosphoribosyltransferase (335 aa).

5-phospho-alpha-D-ribose 1-diphosphate is bound by residues glycine 80, 83–84 (GD), threonine 88, 90–93 (NIST), 108–116 (KHGNRAVSS), and serine 120. Glycine 80 is a binding site for anthranilate. Serine 92 contacts Mg(2+). Asparagine 111 is a binding site for anthranilate. Anthranilate is bound at residue arginine 166. Mg(2+) contacts are provided by aspartate 225 and glutamate 226.

It belongs to the anthranilate phosphoribosyltransferase family. As to quaternary structure, homodimer. It depends on Mg(2+) as a cofactor.

The catalysed reaction is N-(5-phospho-beta-D-ribosyl)anthranilate + diphosphate = 5-phospho-alpha-D-ribose 1-diphosphate + anthranilate. The protein operates within amino-acid biosynthesis; L-tryptophan biosynthesis; L-tryptophan from chorismate: step 2/5. Catalyzes the transfer of the phosphoribosyl group of 5-phosphorylribose-1-pyrophosphate (PRPP) to anthranilate to yield N-(5'-phosphoribosyl)-anthranilate (PRA). This Clostridium kluyveri (strain NBRC 12016) protein is Anthranilate phosphoribosyltransferase.